The chain runs to 463 residues: Argininosuccinate lyase (463 aa).

Belongs to the lyase 1 family. Argininosuccinate lyase subfamily.

It localises to the cytoplasm. The enzyme catalyses 2-(N(omega)-L-arginino)succinate = fumarate + L-arginine. Its pathway is amino-acid biosynthesis; L-arginine biosynthesis; L-arginine from L-ornithine and carbamoyl phosphate: step 3/3. In Chlorobaculum tepidum (strain ATCC 49652 / DSM 12025 / NBRC 103806 / TLS) (Chlorobium tepidum), this protein is Argininosuccinate lyase.